Here is a 460-residue protein sequence, read N- to C-terminus: MSTLDIAEDNKIKNEEFKIWKKSIPSLYQHISSLKPIFGSGVDESPSTLRSIVFTNDSSCNKSKGVLSVPLLYSQGSEIFEVDCIVPLGLHYKKPESISEPLVQPDYTMESQKVEQTVLIPKWEFKGETIAKMIYVDNSEINVKVIALSTNGSLAWFREGVKSPVYTMMEPSTSLSSASSGNQNKPCVDFAISNDSKTLTVTKEKHLDNENATIKLIDNSGKIGEVLRTIPVPGIKNIQEIKFLNNQIFATCSDDGIIRFWGNEIGKKPLWILNDSLDGKTTCFAASPFVDTLFMTGTSGGALKVWDIRAVIALGDADAELNINQGHNKVNELFKVHHFYSEQVSKIEFSSISPMEVVTIGGLGNVYHWNFEPVFAIYNEIHEDFQGIISDELEAESMAFYHTEGCRREIGENNKVNTVAYHKYIEDLVATVDSDGLLTVYKPFTGKVLDGSREVGAAKS.

The NEE-box signature appears at 14–22; sequence NEEFKIWKK. 4 WD repeats span residues 233–271, 276–316, 339–379, and 411–451; these read PGIK…KPLW, SLDG…ALGD, FYSE…AIYN, and GENN…VLDG.

In terms of assembly, component of the RPD3C(L) complex composed of at least ASH1, CTI6, DEP1, PHO23, RPD3, RXT2, RXT3, SAP30, SDS3, SIN3, UME1 and UME6. Component of the RPD3C(S) complex composed of at least EAF3, RCO1, RPD3, SIN3, and UME1. Interacts with RPD3.

The protein localises to the cytoplasm. It localises to the nucleus. Functionally, catalytic component of the RPD3 histone deacetylase complexes RPD3C(L) and RPD3C(S) responsible for the deacetylation of lysine residues on the N-terminal part of the core histones (H2A, H2B, H3 and H4). Histone deacetylation gives a tag for epigenetic repression and plays an important role in transcriptional regulation, cell cycle progression and developmental events. This is Transcriptional regulatory protein UME1 (UME1) from Saccharomyces cerevisiae (strain ATCC 204508 / S288c) (Baker's yeast).